The sequence spans 316 residues: Pentatricopeptide repeat-containing protein At1g19525 (316 aa).

PPR repeat units lie at residues 9–43 (DILT…GLRP), 44–78 (DEKI…ELKA), 79–113 (SEEV…SDGP), 115–149 (SFEA…GHKP), 150–184 (DDKC…GIEI), and 185–219 (GVIT…GEAP).

This sequence belongs to the PPR family. P subfamily.

The sequence is that of Pentatricopeptide repeat-containing protein At1g19525 from Arabidopsis thaliana (Mouse-ear cress).